A 181-amino-acid chain; its full sequence is Oligoribonuclease (181 aa).

Positions 8–171 (LIWIDLEMTG…QDIQESIAEL (164 aa)) constitute an Exonuclease domain. The active site involves Y129.

This sequence belongs to the oligoribonuclease family.

It is found in the cytoplasm. Functionally, 3'-to-5' exoribonuclease specific for small oligoribonucleotides. This is Oligoribonuclease from Shewanella putrefaciens (strain CN-32 / ATCC BAA-453).